The primary structure comprises 447 residues: Phosphoglucosamine mutase (447 aa).

Serine 100 functions as the Phosphoserine intermediate in the catalytic mechanism. Mg(2+) contacts are provided by serine 100, aspartate 239, aspartate 241, and aspartate 243. The residue at position 100 (serine 100) is a Phosphoserine.

It belongs to the phosphohexose mutase family. The cofactor is Mg(2+). Post-translationally, activated by phosphorylation.

The catalysed reaction is alpha-D-glucosamine 1-phosphate = D-glucosamine 6-phosphate. Functionally, catalyzes the conversion of glucosamine-6-phosphate to glucosamine-1-phosphate. This chain is Phosphoglucosamine mutase, found in Caldanaerobacter subterraneus subsp. tengcongensis (strain DSM 15242 / JCM 11007 / NBRC 100824 / MB4) (Thermoanaerobacter tengcongensis).